The chain runs to 386 residues: Signal transduction histidine-protein kinase/phosphatase DegS (386 aa).

One can recognise a Histidine kinase domain in the interval 188 to 384 (KLSREIHDGP…TIIISIPITT (197 aa)). Position 194 is a phosphohistidine; by autocatalysis (H194).

Autophosphorylated.

The protein localises to the cytoplasm. It carries out the reaction ATP + protein L-histidine = ADP + protein N-phospho-L-histidine.. Functionally, member of the two-component regulatory system DegS/DegU, which plays an important role in the transition growth phase. Acts as both a protein kinase that undergoes autophosphorylation and subsequently transfers the phosphate to DegU, and a protein phosphatase that dephosphorylates phospho-DegU. The sequence is that of Signal transduction histidine-protein kinase/phosphatase DegS (degS) from Brevibacillus brevis (Bacillus brevis).